We begin with the raw amino-acid sequence, 343 residues long: Probable dual-specificity RNA methyltransferase RlmN (343 aa).

The active-site Proton acceptor is the Glu-91. The 230-residue stretch at 97–326 (HPDRITACIS…AEIRREKGTD (230 aa)) folds into the Radical SAM core domain. Cysteines 104 and 331 form a disulfide. [4Fe-4S] cluster-binding residues include Cys-111, Cys-115, and Cys-118. Residues 158 to 159 (GE), Ser-190, 213 to 215 (SLH), and Asn-289 each bind S-adenosyl-L-methionine. Cys-331 serves as the catalytic S-methylcysteine intermediate.

The protein belongs to the radical SAM superfamily. RlmN family. [4Fe-4S] cluster is required as a cofactor.

The protein localises to the cytoplasm. The catalysed reaction is adenosine(2503) in 23S rRNA + 2 reduced [2Fe-2S]-[ferredoxin] + 2 S-adenosyl-L-methionine = 2-methyladenosine(2503) in 23S rRNA + 5'-deoxyadenosine + L-methionine + 2 oxidized [2Fe-2S]-[ferredoxin] + S-adenosyl-L-homocysteine. The enzyme catalyses adenosine(37) in tRNA + 2 reduced [2Fe-2S]-[ferredoxin] + 2 S-adenosyl-L-methionine = 2-methyladenosine(37) in tRNA + 5'-deoxyadenosine + L-methionine + 2 oxidized [2Fe-2S]-[ferredoxin] + S-adenosyl-L-homocysteine. Its function is as follows. Specifically methylates position 2 of adenine 2503 in 23S rRNA and position 2 of adenine 37 in tRNAs. In Thermotoga maritima (strain ATCC 43589 / DSM 3109 / JCM 10099 / NBRC 100826 / MSB8), this protein is Probable dual-specificity RNA methyltransferase RlmN.